Reading from the N-terminus, the 91-residue chain is Ribonuclease P protein component 4 (91 aa).

4 residues coordinate Zn(2+): cysteine 48, cysteine 51, cysteine 71, and cysteine 74.

It belongs to the eukaryotic/archaeal RNase P protein component 4 family. Consists of a catalytic RNA component and at least 4-5 protein subunits. Zn(2+) serves as cofactor.

The protein localises to the cytoplasm. It catalyses the reaction Endonucleolytic cleavage of RNA, removing 5'-extranucleotides from tRNA precursor.. Part of ribonuclease P, a protein complex that generates mature tRNA molecules by cleaving their 5'-ends. In Picrophilus torridus (strain ATCC 700027 / DSM 9790 / JCM 10055 / NBRC 100828 / KAW 2/3), this protein is Ribonuclease P protein component 4.